The chain runs to 705 residues: Elongation factor G (705 aa).

The tr-type G domain maps to 7 to 287 (HLTRNIGIMA…YVCAFLPSPL (281 aa)). GTP is bound by residues 16–23 (AHIDAGKT), 84–88 (DTPGH), and 138–141 (NKMD). The tract at residues 293–312 (VGTNPTTGAEEDRKPSEDEK) is disordered. A compositionally biased stretch (basic and acidic residues) spans 302–312 (EEDRKPSEDEK).

Belongs to the TRAFAC class translation factor GTPase superfamily. Classic translation factor GTPase family. EF-G/EF-2 subfamily.

It is found in the cytoplasm. Its function is as follows. Catalyzes the GTP-dependent ribosomal translocation step during translation elongation. During this step, the ribosome changes from the pre-translocational (PRE) to the post-translocational (POST) state as the newly formed A-site-bound peptidyl-tRNA and P-site-bound deacylated tRNA move to the P and E sites, respectively. Catalyzes the coordinated movement of the two tRNA molecules, the mRNA and conformational changes in the ribosome. In Phocaeicola vulgatus (strain ATCC 8482 / DSM 1447 / JCM 5826 / CCUG 4940 / NBRC 14291 / NCTC 11154) (Bacteroides vulgatus), this protein is Elongation factor G.